A 566-amino-acid polypeptide reads, in one-letter code: Sorting nexin lst-4 (566 aa).

Residues 1–61 (MAQVKAEYDF…PESYVTPYQA (61 aa)) enclose the SH3 domain. Positions 59-179 (YQASRPPPVL…DRGSNKVNKN (121 aa)) are disordered. The segment covering 63-77 (RPPPVLPPPLPPTSS) has biased composition (pro residues). The span at 127-140 (DDFDDEWTDEDDEQ) shows a compositional bias: acidic residues. A compositionally biased stretch (polar residues) spans 143 to 154 (TRPNVQSSIGSN). A compositionally biased stretch (basic and acidic residues) spans 155-173 (SRRDLSRSHSEHGGPDRGS). A PX domain is found at 227–339 (YTCIVDKPKK…HFISCTDEKD (113 aa)). One can recognise a BAR domain in the interval 362–566 (TVPHQPLDPN…KLTSLAARYD (205 aa)).

This sequence belongs to the sorting nexin family. Homodimer. Isoform d interacts (via SH3 domain) with dyn-1. In terms of tissue distribution, expressed in vulval precursor cells (VPCs) and apoptotic germ cells. Colocalizes with actin, dyn-1 and rab-5 in early phagosomes.

Its subcellular location is the cytoplasm. The protein resides in the cytoplasmic vesicle. The protein localises to the phagosome membrane. Involved in the signaling of vulval development by acting as a negative regulator of epidermal growth factor receptor (EGFR) signaling. Aids in phagosomal membrane tubule formation which is required for phagosomal fusion with endosomes and lysosomes. Also recruits rab-7 to phagosomes by an interaction with dyn-1. These are events leading to phagosome maturation which is a step in apoptotic cell corpse clearance. Binds phosphatidylinositol-3,4,5-trisphosphate. In Caenorhabditis elegans, this protein is Sorting nexin lst-4.